Here is a 124-residue protein sequence, read N- to C-terminus: Fluoride-specific ion channel FluC (124 aa).

The next 3 helical transmembrane spans lie at 5-27 (LFVA…FMLQ), 70-90 (VGLL…LLLI), and 95-115 (WIKA…MVYL). The Na(+) site is built by Gly74 and Thr77.

Belongs to the fluoride channel Fluc/FEX (TC 1.A.43) family.

The protein localises to the cell inner membrane. The catalysed reaction is fluoride(in) = fluoride(out). Its activity is regulated as follows. Na(+) is not transported, but it plays an essential structural role and its presence is essential for fluoride channel function. Functionally, fluoride-specific ion channel. Important for reducing fluoride concentration in the cell, thus reducing its toxicity. The protein is Fluoride-specific ion channel FluC of Shewanella sediminis (strain HAW-EB3).